Consider the following 23-residue polypeptide: Gastrin-releasing peptide (23 aa).

A Methionine amide modification is found at Met-23.

Belongs to the bombesin/neuromedin-B/ranatensin family.

The protein resides in the secreted. Its subcellular location is the cytoplasmic vesicle. It localises to the secretory vesicle lumen. In terms of biological role, stimulates the release of gastrin and other gastrointestinal hormones. The protein is Gastrin-releasing peptide (grp) of Oncorhynchus mykiss (Rainbow trout).